Consider the following 524-residue polypeptide: Cytochrome P450 monooxygenase oblB (524 aa).

The next 3 helical transmembrane spans lie at 18–38 (ILNAGIAIAGLSAAYAIGLVI), 225–245 (FHSGVVTLPLFMGLPWLIHLI), and 322–342 (VLIGSGTMTTAGTMCFLVYYI). Residue Cys466 participates in heme binding.

The protein belongs to the cytochrome P450 family. Heme serves as cofactor.

The protein localises to the membrane. The enzyme catalyses ophiobolin F + 4 reduced [NADPH--hemoprotein reductase] + 4 O2 = ophiobolin C + 4 oxidized [NADPH--hemoprotein reductase] + 6 H2O + 4 H(+). Its pathway is secondary metabolite biosynthesis; terpenoid biosynthesis. Cytochrome P450 monooxygenase; part of the gene cluster that mediates the biosynthesis of the sesterterpenes ophiobolins, fungal phytotoxins with potential anti-cancer activities. The first step of the pathway is performed by the sesterterpene synthase oblA that possesses both prenyl transferase and terpene cyclase activity, converting isopentenyl diphosphate and dimethylallyl diphosphate into geranylfarnesyl diphosphate (GFPP) and further converting GFPP into ophiobolin F, respectively. Other sesterterpenoids (C(25) terpenoids) are found as minor products of oblA. The cytochrome P450 monooxygenase oblB then catalyzes a four-step oxidative transformation of ophiobolin F to yield ophiobolin C. The FAD-dependent oxidoreductase oblC might be involved in a later oxidation step that produces ophiobolin A. The chain is Cytochrome P450 monooxygenase oblB from Cochliobolus heterostrophus (strain C5 / ATCC 48332 / race O) (Southern corn leaf blight fungus).